A 68-amino-acid polypeptide reads, in one-letter code: conotoxin S11.3 (68 aa).

Positions 1–26 are cleaved as a signal peptide; that stretch reads MMFRLTSVSCFLLVIVCLNLFQVVLT. Cystine bridges form between C29–C43, C36–C48, C42–C52, and C47–C56. At Y60 the chain carries Tyrosine amide. A propeptide spanning residues 64-68 is cleaved from the precursor; sequence ATFQE.

Belongs to the conotoxin I2 superfamily. As to expression, expressed by the venom duct.

Its subcellular location is the secreted. This is conotoxin S11.3 from Conus striatus (Striated cone).